The chain runs to 237 residues: Large ribosomal subunit protein uL1 (237 aa).

This sequence belongs to the universal ribosomal protein uL1 family. Part of the 50S ribosomal subunit.

In terms of biological role, binds directly to 23S rRNA. The L1 stalk is quite mobile in the ribosome, and is involved in E site tRNA release. Protein L1 is also a translational repressor protein, it controls the translation of the L11 operon by binding to its mRNA. In Solibacter usitatus (strain Ellin6076), this protein is Large ribosomal subunit protein uL1.